A 334-amino-acid polypeptide reads, in one-letter code: G2/mitotic-specific cyclin-1 (334 aa).

It belongs to the cyclin family. Cyclin AB subfamily.

In terms of biological role, essential for the control of the cell cycle at the G2/M (mitosis) transition. The polypeptide is G2/mitotic-specific cyclin-1 (CYC1) (Trypanosoma brucei brucei).